The following is a 355-amino-acid chain: Homeotic protein knotted-1 (355 aa).

The interval 205 to 233 (KCEGVGSSEEDQDNSGGETELPEIDPRAE) is disordered. An ELK domain is found at 236-256 (ELKNHLLRKYSGYLSSLKQEL). Residues 257-320 (SKKKKKGKLP…NQRKRHWKPS (64 aa)) constitute a DNA-binding region (homeobox; TALE-type).

It belongs to the TALE/KNOX homeobox family. Expressed in the apical meristems, in the newly emerged lateral primordia in the floral bud, in their vascular bundles and in the cortex parenchyma of the floral pedicle. Also present in the lateral tips of leaf primordia.

The protein resides in the nucleus. Functionally, appears to be involved in meristem formation and in the regulation of leaf morphology. Misexpression makes the leaf more compound which is always associated with growth retardation and loss of apical dominance, resulting in dwarfed, bushy plants. Probably binds to the DNA sequence 5'-TGAC-3'. In Solanum lycopersicum (Tomato), this protein is Homeotic protein knotted-1 (KN1).